Consider the following 393-residue polypeptide: Cobalt-precorrin-5B C(1)-methyltransferase (393 aa).

The segment at 1-35 is disordered; sequence MSDETRVGEAAEQAATPEKIRKGSARRERGNRTGF. Basic and acidic residues predominate over residues 18 to 31; the sequence is EKIRKGSARRERGN.

Belongs to the CbiD family.

The catalysed reaction is Co-precorrin-5B + S-adenosyl-L-methionine = Co-precorrin-6A + S-adenosyl-L-homocysteine. It functions in the pathway cofactor biosynthesis; adenosylcobalamin biosynthesis; cob(II)yrinate a,c-diamide from sirohydrochlorin (anaerobic route): step 6/10. Its function is as follows. Catalyzes the methylation of C-1 in cobalt-precorrin-5B to form cobalt-precorrin-6A. The sequence is that of Cobalt-precorrin-5B C(1)-methyltransferase from Dechloromonas aromatica (strain RCB).